Reading from the N-terminus, the 425-residue chain is 3-isopropylmalate dehydratase large subunit (425 aa).

3 residues coordinate [4Fe-4S] cluster: Cys-305, Cys-365, and Cys-368.

This sequence belongs to the aconitase/IPM isomerase family. LeuC type 2 subfamily. Heterodimer of LeuC and LeuD. [4Fe-4S] cluster is required as a cofactor.

It carries out the reaction (2R,3S)-3-isopropylmalate = (2S)-2-isopropylmalate. It participates in amino-acid biosynthesis; L-leucine biosynthesis; L-leucine from 3-methyl-2-oxobutanoate: step 2/4. Catalyzes the isomerization between 2-isopropylmalate and 3-isopropylmalate, via the formation of 2-isopropylmaleate. This Clostridioides difficile (strain 630) (Peptoclostridium difficile) protein is 3-isopropylmalate dehydratase large subunit.